The following is an 88-amino-acid chain: U-scoloptoxin(XY)-Er1b (88 aa).

Positions methionine 1–serine 24 are cleaved as a signal peptide. The tract at residues arginine 66–alanine 88 is disordered. Positions glutamate 79–alanine 88 are excised as a propeptide.

Belongs to the scoloptoxin-XY family. Post-translationally, contains 3 disulfide bonds. Expressed by the venom gland.

It localises to the secreted. The protein is U-scoloptoxin(XY)-Er1b of Ethmostigmus rubripes (Giant centipede).